Consider the following 1104-residue polypeptide: Inhibitory regulator protein BUD2/CLA2 (1104 aa).

Position 2 is an N-acetylserine (Ser-2). Residues Arg-316–Ile-444 form the C2 domain. The region spanning Ala-536–Met-753 is the Ras-GAP domain. At Ser-854 the chain carries Phosphoserine. Residues Asn-1027–Ser-1104 form a disordered region. Polar residues-rich tracts occupy residues Lys-1029–Asn-1043 and Leu-1052–Lys-1069. A compositionally biased stretch (basic residues) spans Lys-1090–Ser-1104.

Stimulates the GTPase activity of BUD1/RSR1. Participates in the regulation of bud-site selection. This Saccharomyces cerevisiae (strain ATCC 204508 / S288c) (Baker's yeast) protein is Inhibitory regulator protein BUD2/CLA2 (BUD2).